We begin with the raw amino-acid sequence, 85 residues long: Toxin To6 (85 aa).

A signal peptide spans 1–20; sequence MSIFPIILALLLIGLDEGEA. The LCN-type CS-alpha/beta domain maps to 21–83; that stretch reads LDGYPLSKNN…EMYPGRLPCN (63 aa). 4 disulfides stabilise this stretch: cysteine 32/cysteine 82, cysteine 36/cysteine 59, cysteine 42/cysteine 64, and cysteine 46/cysteine 66.

As to expression, expressed by the venom gland.

It localises to the secreted. Beta toxins bind voltage-independently at site-4 of sodium channels (Nav) and shift the voltage of activation toward more negative potentials thereby affecting sodium channel activation and promoting spontaneous and repetitive firing. In Tityus obscurus (Amazonian scorpion), this protein is Toxin To6.